A 283-amino-acid polypeptide reads, in one-letter code: Protoheme IX farnesyltransferase (283 aa).

The next 9 membrane-spanning stretches (helical) occupy residues 6 to 26 (LLLT…AGFL), 35 to 55 (FGLF…GCVF), 85 to 105 (AIVF…FYTN), 106 to 126 (LLTL…YSIW), 131 to 151 (VYGT…GYCA), 160 to 180 (AFIL…SIAI), 207 to 227 (ILLY…FHFT), 230 to 250 (LYLI…LRGL), and 262 to 282 (MFRF…FDLV).

This sequence belongs to the UbiA prenyltransferase family. Protoheme IX farnesyltransferase subfamily.

Its subcellular location is the cell inner membrane. It carries out the reaction heme b + (2E,6E)-farnesyl diphosphate + H2O = Fe(II)-heme o + diphosphate. The protein operates within porphyrin-containing compound metabolism; heme O biosynthesis; heme O from protoheme: step 1/1. Functionally, converts heme B (protoheme IX) to heme O by substitution of the vinyl group on carbon 2 of heme B porphyrin ring with a hydroxyethyl farnesyl side group. This chain is Protoheme IX farnesyltransferase, found in Protochlamydia amoebophila (strain UWE25).